The sequence spans 159 residues: Ribosomal RNA large subunit methyltransferase H (159 aa).

An S-adenosyl-L-methionine-binding site is contributed by G108.

The protein belongs to the RNA methyltransferase RlmH family. As to quaternary structure, homodimer.

The protein resides in the cytoplasm. It carries out the reaction pseudouridine(1915) in 23S rRNA + S-adenosyl-L-methionine = N(3)-methylpseudouridine(1915) in 23S rRNA + S-adenosyl-L-homocysteine + H(+). Its function is as follows. Specifically methylates the pseudouridine at position 1915 (m3Psi1915) in 23S rRNA. In Lactobacillus gasseri (strain ATCC 33323 / DSM 20243 / BCRC 14619 / CIP 102991 / JCM 1131 / KCTC 3163 / NCIMB 11718 / NCTC 13722 / AM63), this protein is Ribosomal RNA large subunit methyltransferase H.